Consider the following 194-residue polypeptide: Aminodeoxychorismate/anthranilate synthase component 2 (194 aa).

A Glutamine amidotransferase type-1 domain is found at 1–194; sequence MILMIDNYDS…IETYRKEVIA (194 aa). Residues Cys79, His168, and Glu170 contribute to the active site.

In terms of assembly, monomer. Heterodimer consisting of two non-identical subunits: a glutamine amidotransferase subunit (PabA) and a aminodeoxychorismate synthase subunit (PabB).

The catalysed reaction is chorismate + L-glutamine = anthranilate + pyruvate + L-glutamate + H(+). The enzyme catalyses chorismate + L-glutamine = 4-amino-4-deoxychorismate + L-glutamate. Its pathway is amino-acid biosynthesis; L-tryptophan biosynthesis; L-tryptophan from chorismate: step 1/5. It functions in the pathway cofactor biosynthesis; tetrahydrofolate biosynthesis; 4-aminobenzoate from chorismate: step 1/2. In terms of biological role, part of a heterodimeric complex that catalyzes the two-step biosynthesis of 4-amino-4-deoxychorismate (ADC), a precursor of p-aminobenzoate (PABA) and tetrahydrofolate. In the first step, a glutamine amidotransferase (PabA) generates ammonia as a substrate that, along with chorismate, is used in the second step, catalyzed by aminodeoxychorismate synthase (PabB) to produce ADC. PabA converts glutamine into glutamate only in the presence of stoichiometric amounts of PabB. Also involved in the biosynthesis of anthranilate. Complements a glutamine amidotransferase-negative mutant. This is Aminodeoxychorismate/anthranilate synthase component 2 from Bacillus subtilis (strain 168).